A 1004-amino-acid polypeptide reads, in one-letter code: 2-oxoglutarate dehydrogenase E1 component (1004 aa).

The protein belongs to the alpha-ketoglutarate dehydrogenase family. In terms of assembly, homodimer. Part of the 2-oxoglutarate dehydrogenase (OGDH) complex composed of E1 (2-oxoglutarate dehydrogenase), E2 (dihydrolipoamide succinyltransferase) and E3 (dihydrolipoamide dehydrogenase); the complex contains multiple copies of the three enzymatic components (E1, E2 and E3). Thiamine diphosphate serves as cofactor.

It catalyses the reaction N(6)-[(R)-lipoyl]-L-lysyl-[protein] + 2-oxoglutarate + H(+) = N(6)-[(R)-S(8)-succinyldihydrolipoyl]-L-lysyl-[protein] + CO2. Its function is as follows. E1 component of the 2-oxoglutarate dehydrogenase (OGDH) complex which catalyzes the decarboxylation of 2-oxoglutarate, the first step in the conversion of 2-oxoglutarate to succinyl-CoA and CO(2). The polypeptide is 2-oxoglutarate dehydrogenase E1 component (Brucella ovis (strain ATCC 25840 / 63/290 / NCTC 10512)).